Consider the following 710-residue polypeptide: Zinc finger and BTB domain-containing protein 24 (710 aa).

One can recognise a BTB domain in the interval 37–103; it reads CDITLIVENV…IYTGYLHASE (67 aa). 2 disordered regions span residues 134 to 176 and 202 to 256; these read APKP…EGRS and EEDS…SRRR. The segment at residues 159-171 is a DNA-binding region (a.T hook); sequence KRKRGRPRKANGL. Composition is skewed to basic and acidic residues over residues 202 to 219 and 231 to 244; these read EEDSVKLSEQTPEDKESE and PAEKDENFDPKAGD. 8 C2H2-type zinc fingers span residues 293-315, 321-343, 349-371, 377-399, 405-427, 433-455, 461-483, and 489-511; these read ARCKDCDRVFKYSHFLAIHQRRH, FKCNECGKGFAQKHSLQVHTRMH, YTCTVCGKALTTKHSLLEHMSLH, FTCDQCGKYFSQKRQLKSHYRVH, PECSHCHRKFMDVSQLKKHLRTH, FTCEICGKSFTAKSSLQTHIRIH, YSCSICGKCFSDSSAKRRHCILH, and FSCPECGLQFARLDNLKAHLKIH. The segment at 651 to 676 is disordered; the sequence is EQTTSSVPAADTGARATPVPSTRPGA.

It belongs to the krueppel C2H2-type zinc-finger protein family. As to quaternary structure, interacts with MN1. As to expression, widely expressed. Highest level in liver, testis and kidney.

The protein resides in the nucleus. In terms of biological role, may be involved in BMP2-induced transcription. The protein is Zinc finger and BTB domain-containing protein 24 (Zbtb24) of Mus musculus (Mouse).